The following is a 153-amino-acid chain: Aspartate carbamoyltransferase regulatory chain (153 aa).

Zn(2+) is bound by residues C109, C114, C138, and C141.

Belongs to the PyrI family. Contains catalytic and regulatory chains. It depends on Zn(2+) as a cofactor.

Functionally, involved in allosteric regulation of aspartate carbamoyltransferase. This is Aspartate carbamoyltransferase regulatory chain from Nitrosopumilus maritimus (strain SCM1).